The chain runs to 689 residues: Glycine--tRNA ligase beta subunit (689 aa).

It belongs to the class-II aminoacyl-tRNA synthetase family. As to quaternary structure, tetramer of two alpha and two beta subunits.

Its subcellular location is the cytoplasm. It carries out the reaction tRNA(Gly) + glycine + ATP = glycyl-tRNA(Gly) + AMP + diphosphate. This chain is Glycine--tRNA ligase beta subunit, found in Escherichia coli (strain K12 / MC4100 / BW2952).